A 464-amino-acid polypeptide reads, in one-letter code: Signal recognition particle 54 kDa protein (464 aa).

Residues 104 to 111 (GLQGSGKT), 184 to 188 (DTAGR), and 242 to 245 (TKLD) each bind GTP.

This sequence belongs to the GTP-binding SRP family. SRP54 subfamily. As to quaternary structure, part of the signal recognition particle protein translocation system, which is composed of SRP and FtsY. Archaeal SRP consists of a 7S RNA molecule of 300 nucleotides and two protein subunits: SRP54 and SRP19.

It is found in the cytoplasm. The catalysed reaction is GTP + H2O = GDP + phosphate + H(+). In terms of biological role, involved in targeting and insertion of nascent membrane proteins into the cytoplasmic membrane. Binds to the hydrophobic signal sequence of the ribosome-nascent chain (RNC) as it emerges from the ribosomes. The SRP-RNC complex is then targeted to the cytoplasmic membrane where it interacts with the SRP receptor FtsY. This is Signal recognition particle 54 kDa protein from Halorubrum lacusprofundi (strain ATCC 49239 / DSM 5036 / JCM 8891 / ACAM 34).